The sequence spans 311 residues: Malate dehydrogenase (311 aa).

NAD(+)-binding positions include Gly7–Gly13 and Asp34. Residues Arg81 and Arg87 each contribute to the substrate site. NAD(+)-binding positions include Asn94 and Ile117 to Asn119. The substrate site is built by Asn119 and Arg153. His177 acts as the Proton acceptor in catalysis. Met227 is an NAD(+) binding site.

It belongs to the LDH/MDH superfamily. MDH type 1 family. Homodimer.

The enzyme catalyses (S)-malate + NAD(+) = oxaloacetate + NADH + H(+). Catalyzes the reversible oxidation of malate to oxaloacetate. The protein is Malate dehydrogenase of Shewanella piezotolerans (strain WP3 / JCM 13877).